Consider the following 303-residue polypeptide: Hemolysin E (303 aa).

A disulfide bridge connects residues Cys87 and Cys285. Residues 179 to 199 traverse the membrane as a helical segment; it reads AGAAAGIVAGPFGLIISYSIA.

It belongs to the hemolysin E family. In terms of assembly, monomer and oligomer. In periplasm, it is present as a monomer, while in outer membrane vesicles, it oligomerizes to form a pore structure that is active. The pore is formed by a dodecamer. Post-translationally, in periplasm, it forms a disulfide bond, which prevents the oligomerization. In outer membrane vesicles, the redox status prevents formation of the disulfide bond, leading to oligomerization and pore formation.

It is found in the secreted. It localises to the periplasm. Its subcellular location is the host cell membrane. Its function is as follows. Toxin, which has some hemolytic activity towards mammalian cells. Acts by forming a pore-like structure upon contact with mammalian cells. This chain is Hemolysin E (hlyE), found in Salmonella typhi.